The primary structure comprises 261 residues: MVFRAGIGRIGLIRGLATQAAEVSATRYKSFKIYRWNPDTPAEKPRMQEYKVDLNKCGPMVLDALIKIKNEQDPTLTFRRSCREGICGSCAMNIGGRNTLACLCKIDQAENKDVKIYPLPHMYVVKDLVPDLTNFYKQYKSIQPYLQKASKPADGREHLQSIADRKKLDGLYECILCACCSTACPSYWWNNEQYLGPAVLMQAYRWMVDSRDGAGAGRREQLQNAMSVYRCHTIMNCTRTCPKGLNPGKAIAEIKKALAFA.

In terms of domain architecture, 2Fe-2S ferredoxin-type spans Phe-31–Met-122. 4 residues coordinate [2Fe-2S] cluster: Cys-82, Cys-87, Cys-90, and Cys-102. A 4Fe-4S ferredoxin-type domain is found at Asp-164–Tyr-194. Cys-174, Cys-177, and Cys-180 together coordinate [4Fe-4S] cluster. Residue Cys-184 participates in [3Fe-4S] cluster binding. Trp-189 contributes to the a ubiquinone binding site. [3Fe-4S] cluster is bound by residues Cys-231 and Cys-237. Cys-241 contributes to the [4Fe-4S] cluster binding site.

This sequence belongs to the succinate dehydrogenase/fumarate reductase iron-sulfur protein family. Component of complex II composed of four subunits: a flavoprotein (FP), an iron-sulfur protein (IP), and a cytochrome b composed of a large and a small subunit. [2Fe-2S] cluster is required as a cofactor. The cofactor is [3Fe-4S] cluster. It depends on [4Fe-4S] cluster as a cofactor.

The protein localises to the mitochondrion inner membrane. It carries out the reaction a quinone + succinate = fumarate + a quinol. It functions in the pathway carbohydrate metabolism; tricarboxylic acid cycle; fumarate from succinate (eukaryal route): step 1/1. In terms of biological role, iron-sulfur protein (IP) subunit of succinate dehydrogenase (SDH) that is involved in complex II of the mitochondrial electron transport chain and is responsible for transferring electrons from succinate to ubiquinone (coenzyme Q). This is Succinate dehydrogenase [ubiquinone] iron-sulfur subunit, mitochondrial (SDH2) from Eremothecium gossypii (strain ATCC 10895 / CBS 109.51 / FGSC 9923 / NRRL Y-1056) (Yeast).